We begin with the raw amino-acid sequence, 378 residues long: Chaperone protein DnaJ (378 aa).

In terms of domain architecture, J spans 5–70 (DYYEVLSVGR…DKKAAYDQFG (66 aa)). Residues 133–211 (GLTKELRIPT…CHGEGRVEKS (79 aa)) form a CR-type zinc finger. Cys-146, Cys-149, Cys-163, Cys-166, Cys-185, Cys-188, Cys-199, and Cys-202 together coordinate Zn(2+). CXXCXGXG motif repeat units lie at residues 146–153 (CDTCDGSG), 163–170 (CGTCHGQG), 185–192 (CPTCHGRG), and 199–206 (CNSCHGEG).

It belongs to the DnaJ family. In terms of assembly, homodimer. The cofactor is Zn(2+).

It is found in the cytoplasm. Participates actively in the response to hyperosmotic and heat shock by preventing the aggregation of stress-denatured proteins and by disaggregating proteins, also in an autonomous, DnaK-independent fashion. Unfolded proteins bind initially to DnaJ; upon interaction with the DnaJ-bound protein, DnaK hydrolyzes its bound ATP, resulting in the formation of a stable complex. GrpE releases ADP from DnaK; ATP binding to DnaK triggers the release of the substrate protein, thus completing the reaction cycle. Several rounds of ATP-dependent interactions between DnaJ, DnaK and GrpE are required for fully efficient folding. Also involved, together with DnaK and GrpE, in the DNA replication of plasmids through activation of initiation proteins. This chain is Chaperone protein DnaJ, found in Shewanella woodyi (strain ATCC 51908 / MS32).